The sequence spans 747 residues: Cysteine--tRNA ligase, cytoplasmic (747 aa).

The tract at residues 1–26 (MTESWEQGKGRRTQPPWSAPNTNEQP) is disordered. Positions 15–25 (PPWSAPNTNEQ) are enriched in polar residues. Zn(2+) is bound at residue cysteine 54. Residue glycine 55 coordinates L-cysteine. The 'HIGH' region signature appears at 56 to 66 (PTVYDASHMGH). L-cysteine is bound at residue threonine 95. The short motif at 100–103 (KIIK) is the 'KIIK' region element. Zn(2+)-binding residues include cysteine 347, histidine 372, and glutamate 376. Histidine 372 serves as a coordination point for L-cysteine. The short motif at 405 to 409 (KMSKS) is the 'KMSKS' region element. Residue lysine 408 coordinates ATP. Residues 651–683 (EEKRKAEEEKQRKKEEAARKKQQQEAAKLEKMK) are compositionally biased toward basic and acidic residues. Disordered stretches follow at residues 651–685 (EEKR…MKIS) and 700–721 (FDES…GQTK).

This sequence belongs to the class-I aminoacyl-tRNA synthetase family. As to quaternary structure, homodimer. The cofactor is Zn(2+).

It localises to the cytoplasm. It catalyses the reaction tRNA(Cys) + L-cysteine + ATP = L-cysteinyl-tRNA(Cys) + AMP + diphosphate. In terms of biological role, catalyzes the ATP-dependent ligation of cysteine to tRNA(Cys). The protein is Cysteine--tRNA ligase, cytoplasmic (cars1) of Xenopus laevis (African clawed frog).